The primary structure comprises 259 residues: 7alpha-hydroxysteroid dehydrogenase (259 aa).

Residues Ile18, 37–38 (DY), and Asn90 contribute to the NAD(+) site. Glycochenodeoxycholate contacts are provided by Ser145 and Tyr158. Residues Tyr158, Lys162, and 191–193 (ILT) contribute to the NAD(+) site. The active-site Proton acceptor is the Tyr158.

It belongs to the short-chain dehydrogenases/reductases (SDR) family. Homotetramer.

It catalyses the reaction cholate + NAD(+) = 3alpha,12alpha-dihydroxy-7-oxo-5beta-cholanate + NADH + H(+). The enzyme catalyses chenodeoxycholate + NAD(+) = 7-oxolithocholate + NADH + H(+). The catalysed reaction is taurochenodeoxycholate + NAD(+) = 7-oxotaurolithocholate + NADH + H(+). It carries out the reaction glycochenodeoxycholate + NAD(+) = 7-oxoglycolithocholate + NADH + H(+). It catalyses the reaction taurocholate + NAD(+) = 7-oxo-taurodeoxycholate + NADH + H(+). The enzyme catalyses glycocholate + NAD(+) = 7-oxo-glycodeoxycholate + NADH + H(+). The catalysed reaction is an aromatic primary alcohol + NAD(+) = an aromatic aldehyde + NADH + H(+). It carries out the reaction benzyl alcohol + NAD(+) = benzaldehyde + NADH + H(+). It catalyses the reaction 4-cyanobenzyl alcohol + NAD(+) = 4-cyanobenzaldehyde + NADH + H(+). The enzyme catalyses 4-acetoxybenzyl alcohol + NAD(+) = 4-acetoxybenzaldehyde + NADH + H(+). The catalysed reaction is 4-(trifluoromethyl)benzyl alcohol + NAD(+) = 4-(trifluoromethyl)benzaldehyde + NADH + H(+). Its function is as follows. 7alpha-hydroxysteroid dehydrogenase involved in the metabolism of bile acids in the gut. Catalyzes the NAD(+)-dependent oxidation of the 7alpha-hydroxy group of 7alpha-hydroxysteroids, such as cholate, chenodeoxycholate, taurochenodeoxycholate, glycochenodeoxycholate, taurocholate and glycocholate, to the corresponding 7-oxosteroids. Since it is also able to catalyze the reduction of nonsteroidal carbonyl compounds such as various benzaldehyde analogs to their corresponding benzyl alcohols, this enzyme may also function in the detoxification of xenobiotics containing carbonyl groups in the large intestine. The polypeptide is 7alpha-hydroxysteroid dehydrogenase (Bacteroides fragilis (strain ATCC 25285 / DSM 2151 / CCUG 4856 / JCM 11019 / LMG 10263 / NCTC 9343 / Onslow / VPI 2553 / EN-2)).